We begin with the raw amino-acid sequence, 33 residues long: Brevinin-2LT (33 aa).

Cysteines 27 and 33 form a disulfide.

Expressed by the skin glands.

The protein localises to the secreted. Functionally, has antibacterial activity. The chain is Brevinin-2LT from Rana latastei (Italian agile frog).